The sequence spans 335 residues: UPF0353 protein MLBr01808 (335 aa).

The next 2 helical transmembrane spans lie at 18 to 38 and 67 to 87; these read WFFL…MMQV and VPAI…AGPT. A VWFA domain is found at 98–294; it reads VVMLVIDVSQ…AELKAVYASL (197 aa). Residues 309–329 traverse the membrane as a helical segment; it reads AGWLRLGVLVLALAALTALLI.

The protein belongs to the UPF0353 family.

The protein localises to the cell membrane. This chain is UPF0353 protein MLBr01808, found in Mycobacterium leprae (strain Br4923).